The following is a 335-amino-acid chain: Glyceraldehyde-3-phosphate dehydrogenase (335 aa).

Residues 13 to 14, aspartate 34, methionine 79, and serine 121 contribute to the NAD(+) site; that span reads RI. D-glyceraldehyde 3-phosphate is bound by residues 151 to 153, threonine 182, 211 to 212, and arginine 234; these read SCT and TG. Residue cysteine 152 is the Nucleophile of the active site. Residue cysteine 152 is modified to S-nitrosocysteine. Residue asparagine 316 participates in NAD(+) binding.

This sequence belongs to the glyceraldehyde-3-phosphate dehydrogenase family. As to quaternary structure, homotetramer. Post-translationally, S-nitrosylation of Cys-152 leads to translocation to the nucleus.

Its subcellular location is the cytoplasm. It localises to the cytosol. The protein localises to the cytoskeleton. The protein resides in the nucleus. It carries out the reaction D-glyceraldehyde 3-phosphate + phosphate + NAD(+) = (2R)-3-phospho-glyceroyl phosphate + NADH + H(+). The catalysed reaction is S-nitroso-L-cysteinyl-[GAPDH] + L-cysteinyl-[protein] = L-cysteinyl-[GAPDH] + S-nitroso-L-cysteinyl-[protein]. It participates in carbohydrate degradation; glycolysis; pyruvate from D-glyceraldehyde 3-phosphate: step 1/5. Its function is as follows. Has both glyceraldehyde-3-phosphate dehydrogenase and nitrosylase activities, thereby playing a role in glycolysis and nuclear functions, respectively. Glyceraldehyde-3-phosphate dehydrogenase is a key enzyme in glycolysis that catalyzes the first step of the pathway by converting D-glyceraldehyde 3-phosphate (G3P) into 3-phospho-D-glyceroyl phosphate. Participates in nuclear events including transcription, RNA transport, DNA replication and apoptosis. Nuclear functions are probably due to the nitrosylase activity that mediates cysteine S-nitrosylation of nuclear target proteins such as SIRT1, HDAC2 and PRKDC. The sequence is that of Glyceraldehyde-3-phosphate dehydrogenase (gapdh) from Oncorhynchus mykiss (Rainbow trout).